The chain runs to 187 residues: Large ribosomal subunit protein uL5 (187 aa).

This sequence belongs to the universal ribosomal protein uL5 family. In terms of assembly, part of the 50S ribosomal subunit; part of the 5S rRNA/L5/L18/L25 subcomplex. Contacts the 5S rRNA and the P site tRNA. Forms a bridge to the 30S subunit in the 70S ribosome.

Functionally, this is one of the proteins that bind and probably mediate the attachment of the 5S RNA into the large ribosomal subunit, where it forms part of the central protuberance. In the 70S ribosome it contacts protein S13 of the 30S subunit (bridge B1b), connecting the 2 subunits; this bridge is implicated in subunit movement. Contacts the P site tRNA; the 5S rRNA and some of its associated proteins might help stabilize positioning of ribosome-bound tRNAs. The polypeptide is Large ribosomal subunit protein uL5 (Mycolicibacterium smegmatis (strain ATCC 700084 / mc(2)155) (Mycobacterium smegmatis)).